We begin with the raw amino-acid sequence, 178 residues long: Interleukin-10 (178 aa).

The signal sequence occupies residues 1–18 (MPSSALLYCLILLAGVRP). 2 disulfide bridges follow: C30–C126 and C80–C132. The N-linked (GlcNAc...) asparagine glycan is linked to N134.

It belongs to the IL-10 family. As to quaternary structure, homodimer. Interacts with IL10RA and IL10RB.

The protein localises to the secreted. In terms of biological role, major immune regulatory cytokine that acts on many cells of the immune system where it has profound anti-inflammatory functions, limiting excessive tissue disruption caused by inflammation. Mechanistically, IL10 binds to its heterotetrameric receptor comprising IL10RA and IL10RB leading to JAK1 and STAT2-mediated phosphorylation of STAT3. In turn, STAT3 translocates to the nucleus where it drives expression of anti-inflammatory mediators. Targets antigen-presenting cells (APCs) such as macrophages and monocytes and inhibits their release of pro-inflammatory cytokines including granulocyte-macrophage colony-stimulating factor /GM-CSF, granulocyte colony-stimulating factor/G-CSF, IL-1 alpha, IL-1 beta, IL-6, IL-8 and TNF-alpha. Also interferes with antigen presentation by reducing the expression of MHC-class II and co-stimulatory molecules, thereby inhibiting their ability to induce T cell activation. In addition, controls the inflammatory response of macrophages by reprogramming essential metabolic pathways including mTOR signaling. In Meriones unguiculatus (Mongolian jird), this protein is Interleukin-10 (IL10).